The primary structure comprises 85 residues: Neurotoxin beta-KTx 14.3 (85 aa).

A signal peptide spans 1–20; sequence MKQYIFFLALIVLTATFAEA. The propeptide occupies 21-37; the sequence is GKKTEILDKVKKVFSKG. The BetaSPN-type CS-alpha/beta domain occupies 49 to 85; the sequence is ELGCPFIEKWCEDHCESKKQVGKCENFDCSCVKLGGK. Intrachain disulfides connect Cys52–Cys72, Cys59–Cys77, and Cys63–Cys79.

Belongs to the long chain scorpion toxin family. Class 2 subfamily. In terms of tissue distribution, expressed by the venom gland.

Its subcellular location is the secreted. Toxin with activity on voltage-gated potassium channels. Moderately and reversibly blocks up to 50% of the activity of Kv7.1/KCNQ1 (tested at 22 uM). 3D-structure modeling of the KCNQ1-toxin complex shows that the toxin interacts with the channel pore domain. Additionally, shows a very weak effect to block voltage-gated potassium channel Kv1.1/KCNA1. Its function is as follows. Has a very weak effect to block voltage-gated potassium channel Kv1.1/KCNA1. In Lychas mucronatus (Chinese swimming scorpion), this protein is Neurotoxin beta-KTx 14.3.